We begin with the raw amino-acid sequence, 295 residues long: Transmembrane protein 71 (295 aa).

Helical transmembrane passes span 229–249 (LLQE…ISAC) and 253–273 (FMGE…VAYV).

It belongs to the TMEM71 family.

Its subcellular location is the membrane. The sequence is that of Transmembrane protein 71 (TMEM71) from Homo sapiens (Human).